We begin with the raw amino-acid sequence, 523 residues long: Bifunctional purine biosynthesis protein PurH (523 aa).

Residues 1 to 154 (MTATAGSNKR…KNHPSVAVVT (154 aa)) form the MGS-like domain.

This sequence belongs to the PurH family.

The catalysed reaction is (6R)-10-formyltetrahydrofolate + 5-amino-1-(5-phospho-beta-D-ribosyl)imidazole-4-carboxamide = 5-formamido-1-(5-phospho-D-ribosyl)imidazole-4-carboxamide + (6S)-5,6,7,8-tetrahydrofolate. The enzyme catalyses IMP + H2O = 5-formamido-1-(5-phospho-D-ribosyl)imidazole-4-carboxamide. Its pathway is purine metabolism; IMP biosynthesis via de novo pathway; 5-formamido-1-(5-phospho-D-ribosyl)imidazole-4-carboxamide from 5-amino-1-(5-phospho-D-ribosyl)imidazole-4-carboxamide (10-formyl THF route): step 1/1. It functions in the pathway purine metabolism; IMP biosynthesis via de novo pathway; IMP from 5-formamido-1-(5-phospho-D-ribosyl)imidazole-4-carboxamide: step 1/1. The sequence is that of Bifunctional purine biosynthesis protein PurH from Streptomyces coelicolor (strain ATCC BAA-471 / A3(2) / M145).